The following is a 492-amino-acid chain: MTHELFDSKGLLGSAPAAFVAGEYELDSSHGTLPVINPANGQLVAEVPSSSSSTVDRAVTAAVAAQREWGRRSHVARAAVLEAVRDAIAVHADELARIVSVEQGKPLSDARGETEGACAFFDFAISQKYRAVGSMMASEPGRSLGVREEPIGVVAAILPWNFPVAIFARKVAPALMAGNAVVLKPSELTPLSALALARLCRLAGVPDGLLSVVCGEGKDTGRALVTHPGVGMVTMTGSTRGGREILAQVADQIIPVSLELGGKAPFIVFEDADLDAAVEAAADARLWNTGQVCTCNEVTYVHADLHDEFVRRVVDRFASVTPLDPFAAGSRLGPLVAERERTRVQGMVDAAVAAGARVRTGGGRPDGEQYQSGAWFAPTVLTNVRPEMDIARREVFGPVLPIIPFDAEAEVVSAANSTAYGLTAYVYTRDLSRAMRMIDALEFGEVYVNQAGPEQVQGFHTGWKSSGLGGDDGPHGYEKYLRRKTVYVRHAV.

Residues 160-161 (WN), 184-187 (KPSE), and 237-238 (GS) each bind NADP(+). Glu259 (proton acceptor) is an active-site residue. Position 260 (Leu260) interacts with NADP(+). Cys293 serves as the catalytic Nucleophile. Glu394 is an NADP(+) binding site.

The protein belongs to the aldehyde dehydrogenase family.

The enzyme catalyses 3,6-anhydro-alpha-L-galactopyranose + NADP(+) + H2O = 3,6-anhydro-L-galactonate + NADPH + 2 H(+). Its activity is regulated as follows. Significantly inhibited by EDTA. Activity is enhanced by Fe(2+), but is strongly inhibited by Mn(2+), Cu(2+), Zn(2+), Ni(2+) and Co(2+). In terms of biological role, involved in the degradation of 3,6-anhydro-L-galactose, which is the major monomeric sugar of red macroalgae. Catalyzes the oxidation of 3,6-anhydro-L-galactose (AHG) to form 3,6-anhydrogalactonate (AHGA). Shows broad substrate specificity, with maximum activity toward AHG. The enzyme activities toward D-fructose, D-galactose and D-ribose are between 40% and 50% of the maximum, but those toward L-rhamnose, L-glyceraldehyde, D-glyceraldehyde, L-fucose and D-glucose are much lower. This chain is 3,6-anhydro-alpha-L-galactose dehydrogenase, found in Streptomyces coelicolor (strain ATCC BAA-471 / A3(2) / M145).